The following is a 213-amino-acid chain: Probable elongation factor 1-beta/1-delta 1 (213 aa).

This sequence belongs to the EF-1-beta/EF-1-delta family. EF-1 is composed of 4 subunits: alpha, beta, delta, and gamma.

In terms of biological role, EF-1-beta and EF-1-delta stimulate the exchange of GDP bound to EF-1-alpha to GTP. The polypeptide is Probable elongation factor 1-beta/1-delta 1 (eef-1B.1) (Caenorhabditis elegans).